The primary structure comprises 298 residues: Protease HtpX (298 aa).

2 helical membrane-spanning segments follow: residues 4–24 (IALYLLTNLAVIVVASITLSL) and 41–61 (TSLLIFSAVFGFAGSLISLLI). His-147 is a Zn(2+) binding site. Glu-148 is a catalytic residue. Residue His-151 participates in Zn(2+) binding. Helical transmembrane passes span 162 to 182 (LIQGVVNTFVIFAARVVGYVI) and 193 to 213 (GLGFGYYIVVIVTEIIFGIAA). Residue Glu-225 participates in Zn(2+) binding.

The protein belongs to the peptidase M48B family. Zn(2+) serves as cofactor.

The protein localises to the cell inner membrane. This Alcanivorax borkumensis (strain ATCC 700651 / DSM 11573 / NCIMB 13689 / SK2) protein is Protease HtpX.